Consider the following 232-residue polypeptide: Lipoprotein-releasing system ATP-binding protein LolD 1 (232 aa).

The ABC transporter domain occupies 11–231 (VYLHDVKRQY…SIQDGLVVEL (221 aa)). Residue 47–54 (APSGAGKS) coordinates ATP.

The protein belongs to the ABC transporter superfamily. Lipoprotein translocase (TC 3.A.1.125) family. The complex is composed of two ATP-binding proteins (LolD) and two transmembrane proteins (LolC and LolE).

It is found in the cell inner membrane. Part of the ABC transporter complex LolCDE involved in the translocation of mature outer membrane-directed lipoproteins, from the inner membrane to the periplasmic chaperone, LolA. Responsible for the formation of the LolA-lipoprotein complex in an ATP-dependent manner. In Rhodopseudomonas palustris (strain BisB18), this protein is Lipoprotein-releasing system ATP-binding protein LolD 1.